Reading from the N-terminus, the 254-residue chain is Alcohol dehydrogenase (254 aa).

10–33 (FVAGLGGIGLDTSRELVKRNLKNL) is an NAD(+) binding site. A substrate-binding site is contributed by S138. Y151 functions as the Proton acceptor in the catalytic mechanism.

Belongs to the short-chain dehydrogenases/reductases (SDR) family. As to quaternary structure, homodimer.

It carries out the reaction a primary alcohol + NAD(+) = an aldehyde + NADH + H(+). The catalysed reaction is a secondary alcohol + NAD(+) = a ketone + NADH + H(+). This chain is Alcohol dehydrogenase (Adh), found in Drosophila pseudoobscura pseudoobscura (Fruit fly).